The following is a 479-amino-acid chain: Ribosomal RNA small subunit methyltransferase F (479 aa).

Residues 125–131 (AAAPGSK), Glu149, Asp176, and Asp194 contribute to the S-adenosyl-L-methionine site. Cys247 serves as the catalytic Nucleophile.

It belongs to the class I-like SAM-binding methyltransferase superfamily. RsmB/NOP family.

The protein resides in the cytoplasm. It catalyses the reaction cytidine(1407) in 16S rRNA + S-adenosyl-L-methionine = 5-methylcytidine(1407) in 16S rRNA + S-adenosyl-L-homocysteine + H(+). Its function is as follows. Specifically methylates the cytosine at position 1407 (m5C1407) of 16S rRNA. In Salmonella arizonae (strain ATCC BAA-731 / CDC346-86 / RSK2980), this protein is Ribosomal RNA small subunit methyltransferase F.